A 360-amino-acid chain; its full sequence is Aminomethyltransferase (360 aa).

This sequence belongs to the GcvT family. As to quaternary structure, the glycine cleavage system is composed of four proteins: P, T, L and H.

The catalysed reaction is N(6)-[(R)-S(8)-aminomethyldihydrolipoyl]-L-lysyl-[protein] + (6S)-5,6,7,8-tetrahydrofolate = N(6)-[(R)-dihydrolipoyl]-L-lysyl-[protein] + (6R)-5,10-methylene-5,6,7,8-tetrahydrofolate + NH4(+). Functionally, the glycine cleavage system catalyzes the degradation of glycine. The polypeptide is Aminomethyltransferase (Legionella pneumophila subsp. pneumophila (strain Philadelphia 1 / ATCC 33152 / DSM 7513)).